Here is a 268-residue protein sequence, read N- to C-terminus: 3-deoxy-manno-octulosonate cytidylyltransferase (268 aa).

Belongs to the KdsB family.

It localises to the cytoplasm. The enzyme catalyses 3-deoxy-alpha-D-manno-oct-2-ulosonate + CTP = CMP-3-deoxy-beta-D-manno-octulosonate + diphosphate. It participates in nucleotide-sugar biosynthesis; CMP-3-deoxy-D-manno-octulosonate biosynthesis; CMP-3-deoxy-D-manno-octulosonate from 3-deoxy-D-manno-octulosonate and CTP: step 1/1. Its pathway is bacterial outer membrane biogenesis; lipopolysaccharide biosynthesis. Activates KDO (a required 8-carbon sugar) for incorporation into bacterial lipopolysaccharide in Gram-negative bacteria. The polypeptide is 3-deoxy-manno-octulosonate cytidylyltransferase (Ralstonia pickettii (strain 12J)).